We begin with the raw amino-acid sequence, 170 residues long: Photosystem I assembly protein Ycf3 (170 aa).

TPR repeat units lie at residues 35–68 (AFTY…EIDP), 72–105 (SYIL…NPFL), and 120–153 (GEQA…TPGN).

It belongs to the Ycf3 family.

The protein localises to the plastid. Its subcellular location is the chloroplast thylakoid membrane. In terms of biological role, essential for the assembly of the photosystem I (PSI) complex. May act as a chaperone-like factor to guide the assembly of the PSI subunits. The sequence is that of Photosystem I assembly protein Ycf3 from Agrostis stolonifera (Creeping bentgrass).